A 74-amino-acid chain; its full sequence is Fulgimotoxin (74 aa).

The residue at position 1 (Gln1) is a Pyrrolidone carboxylic acid. 5 cysteine pairs are disulfide-bonded: Cys10-Cys34, Cys13-Cys21, Cys27-Cys51, Cys55-Cys66, and Cys67-Cys72.

Belongs to the three-finger toxin family. Ancestral subfamily. Boigatoxin sub-subfamily. In terms of assembly, monomer. The N-terminus is blocked. In terms of processing, contains 5 disulfide bonds. Expressed by the venom gland.

The protein localises to the secreted. Reptile-specific three-finger toxin that is lethal at low doses for lizards, but not for mice. Probably acts as a neurotoxin. The chain is Fulgimotoxin from Oxybelis fulgidus (Green vine snake).